We begin with the raw amino-acid sequence, 589 residues long: DNA ligase (589 aa).

Residue Glu-250 coordinates ATP. Lys-252 acts as the N6-AMP-lysine intermediate in catalysis. ATP contacts are provided by Arg-257, Arg-272, Glu-302, Phe-342, Arg-417, and Lys-423.

Belongs to the ATP-dependent DNA ligase family. It depends on Mg(2+) as a cofactor.

It carries out the reaction ATP + (deoxyribonucleotide)n-3'-hydroxyl + 5'-phospho-(deoxyribonucleotide)m = (deoxyribonucleotide)n+m + AMP + diphosphate.. DNA ligase that seals nicks in double-stranded DNA during DNA replication, DNA recombination and DNA repair. This chain is DNA ligase, found in Cenarchaeum symbiosum (strain A).